A 208-amino-acid chain; its full sequence is MIVLALDVYEGERAIKIAKSVKDYISMIKVNWPLILGSGVDIIRRLKEETGVEIIADLKLADIPNTNRLIARKVFGAGADYVIVHTFVGRDSVMAVKELGEIIMVVEMSHPGALEFINPLTDRFIEVANEIEPFGVIAPGTRPERIGYIRDRLKEGIKILAPGIGAQGGKAKDAVKAGADYIIVGRAIYNAPNPREAAKAIYDEIRGV.

Residues Asp-7, Lys-29, 57-66, Ser-109, 162-172, Gly-185, and Arg-186 each bind substrate; these read DLKLADIPNT and PGIGAQGGKAK. Catalysis depends on Lys-59, which acts as the Proton donor.

This sequence belongs to the OMP decarboxylase family. Type 1 subfamily. In terms of assembly, homodimer.

The enzyme catalyses orotidine 5'-phosphate + H(+) = UMP + CO2. The protein operates within pyrimidine metabolism; UMP biosynthesis via de novo pathway; UMP from orotate: step 2/2. Functionally, catalyzes the decarboxylation of orotidine 5'-monophosphate (OMP) to uridine 5'-monophosphate (UMP). In Pyrococcus horikoshii (strain ATCC 700860 / DSM 12428 / JCM 9974 / NBRC 100139 / OT-3), this protein is Orotidine 5'-phosphate decarboxylase (pyrF).